The chain runs to 312 residues: Protein ABIL2 (312 aa).

The disordered stretch occupies residues 173–287; the sequence is TIRETPPPPV…TEQQQPSKSK (115 aa). The segment covering 183-199 has biased composition (low complexity); it reads RKSTSQSSSPRQPPQRS. A compositionally biased stretch (polar residues) spans 230 to 251; that stretch reads SVATRKSASISRPTTPSKSRSI. Over residues 269 to 279 the composition is skewed to basic and acidic residues; the sequence is AFEKDNQKETE.

This sequence belongs to the ABI family. In terms of assembly, binds SCAR.

It is found in the cytoplasm. The protein localises to the cytoskeleton. Its function is as follows. Involved in regulation of actin and microtubule organization. Part of a WAVE complex that activates the Arp2/3 complex. The sequence is that of Protein ABIL2 (ABIL2) from Arabidopsis thaliana (Mouse-ear cress).